We begin with the raw amino-acid sequence, 73 residues long: Sec-independent protein translocase protein TatA (73 aa).

A helical transmembrane segment spans residues 1–21 (MGSFSIWHWLIVLVIVMLVFG). The interval 50–73 (KEQIQQSSATAEKTVDVQAKDVNK) is disordered. Positions 62 to 73 (KTVDVQAKDVNK) are enriched in basic and acidic residues.

Belongs to the TatA/E family. As to quaternary structure, the Tat system comprises two distinct complexes: a TatABC complex, containing multiple copies of TatA, TatB and TatC subunits, and a separate TatA complex, containing only TatA subunits. Substrates initially bind to the TatABC complex, which probably triggers association of the separate TatA complex to form the active translocon.

Its subcellular location is the cell inner membrane. Its function is as follows. Part of the twin-arginine translocation (Tat) system that transports large folded proteins containing a characteristic twin-arginine motif in their signal peptide across membranes. TatA could form the protein-conducting channel of the Tat system. The polypeptide is Sec-independent protein translocase protein TatA (Polynucleobacter necessarius subsp. necessarius (strain STIR1)).